A 473-amino-acid chain; its full sequence is Bestrophin-4 (473 aa).

The Cytoplasmic portion of the chain corresponds to 1 to 31 (MTVSYTLKVAEARFGGFSGLLLRWRGSIYKL). A10 contacts Ca(2+). A helical membrane pass occupies residues 32-51 (LYKEFLLFGALYAVLSITYR). Over 52 to 60 (LLLTQEQRY) the chain is Extracellular. Residues 61–82 (VYAQVARYCNRSADLIPLSFVL) traverse the membrane as a helical segment. The Cytoplasmic portion of the chain corresponds to 83-237 (GFYVTLVVNR…DWISIPLVYT (155 aa)). A helical membrane pass occupies residues 238-255 (QVVTIAVYSFFALSLVGR). At 256 to 289 (QFVEPEAGAAKPQKLLKPGQEPAPALGDPDMYVP) the chain is on the extracellular side. A helical membrane pass occupies residues 290-303 (LTTLLQFFFYAGWL). The Cytoplasmic portion of the chain corresponds to 304 to 473 (KVAEQIINPF…AESGDEALEP (170 aa)). Q308, N311, D316, and D319 together coordinate Ca(2+). Disordered regions lie at residues 379 to 408 (TFNLRMSDDPEQSLQVEASPGSGRPAPAAQ) and 428 to 473 (RNFG…ALEP). Low complexity predominate over residues 396-407 (ASPGSGRPAPAA). Residues 445–461 (FRAEEGGDPEAAARIEE) are compositionally biased toward basic and acidic residues. Residues 462–473 (ESAESGDEALEP) show a composition bias toward acidic residues.

It belongs to the anion channel-forming bestrophin (TC 1.A.46) family. Calcium-sensitive chloride channel subfamily. As to expression, predominantly found in colon and the weakly in fetal brain, spinal cord, retina, lung, trachea, testis and placenta.

The protein localises to the cell membrane. It catalyses the reaction chloride(in) = chloride(out). It carries out the reaction hydrogencarbonate(in) = hydrogencarbonate(out). Its function is as follows. Ligand-gated anion channel that allows the movement of anions across cell membranes when activated by Calcium (Ca2+). Mediates the movement of hydrogencarbonate and chloride. This chain is Bestrophin-4, found in Homo sapiens (Human).